The sequence spans 330 residues: Ribose-phosphate pyrophosphokinase (330 aa).

ATP contacts are provided by residues 40–42 (DGE) and 99–100 (RQ). His133 and Asp174 together coordinate Mg(2+). The active site involves Lys197. Residues Arg199, Asp223, and 227–231 (DTGGT) contribute to the D-ribose 5-phosphate site.

The protein belongs to the ribose-phosphate pyrophosphokinase family. Class I subfamily. Homohexamer. It depends on Mg(2+) as a cofactor.

The protein resides in the cytoplasm. It catalyses the reaction D-ribose 5-phosphate + ATP = 5-phospho-alpha-D-ribose 1-diphosphate + AMP + H(+). It participates in metabolic intermediate biosynthesis; 5-phospho-alpha-D-ribose 1-diphosphate biosynthesis; 5-phospho-alpha-D-ribose 1-diphosphate from D-ribose 5-phosphate (route I): step 1/1. Its function is as follows. Involved in the biosynthesis of the central metabolite phospho-alpha-D-ribosyl-1-pyrophosphate (PRPP) via the transfer of pyrophosphoryl group from ATP to 1-hydroxyl of ribose-5-phosphate (Rib-5-P). In Ureaplasma parvum serovar 3 (strain ATCC 700970), this protein is Ribose-phosphate pyrophosphokinase.